Reading from the N-terminus, the 180-residue chain is Putative manganese efflux pump MntP (180 aa).

Transmembrane regions (helical) follow at residues 6-26 (LMAL…GIGL), 34-54 (ILQI…TGWL), 67-87 (AAVI…WAAW), 102-122 (FWGL…AGFT), 131-151 (LLAA…GLVF), and 160-180 (GERA…KLFF).

It belongs to the MntP (TC 9.B.29) family.

Its subcellular location is the cell membrane. In terms of biological role, probably functions as a manganese efflux pump. This Pelotomaculum thermopropionicum (strain DSM 13744 / JCM 10971 / SI) protein is Putative manganese efflux pump MntP.